A 521-amino-acid chain; its full sequence is GRAS family protein RAD1 (521 aa).

One can recognise a GRAS domain in the interval 137–520; it reads DGSCADGMRL…KPIVAVSCWK (384 aa). The segment at 144-212 is leucine repeat I (LRI); it reads MRLVQLLIAC…PIGNNSAGSD (69 aa). Residues 231 to 301 form a VHIID region; that stretch reads FKLVYENCPH…HRVRRLRITA (71 aa). Positions 262 to 266 match the VHIID motif; it reads LHVVD. A leucine repeat II (LRII) region spans residues 311-343; it reads VIGEELSIYAKNLGIHLEFSIVEKNLENLKPKD. Residues 352–443 form a PFYRE region; the sequence is LVVNSILQLH…QFYFAEEIKN (92 aa). The tract at residues 446–520 is SAW; it reads SCEGPLRMER…KPIVAVSCWK (75 aa).

This sequence belongs to the GRAS family. As to quaternary structure, interacts with RAM1. Interacts with NSP2.

The protein localises to the nucleus. In terms of biological role, transcription factor acting as a regulator of arbuscular mycorrhiza (AM)-related genes (e.g. STR). Required for the morphogenesis of arbuscules upon symbiosis with AM fungi (e.g. Glomus versiforme). Also involved in restricting mycorrhizal colonization of the root meristem. The protein is GRAS family protein RAD1 of Medicago truncatula (Barrel medic).